Reading from the N-terminus, the 85-residue chain is UPF0386 protein Arad_1912 (85 aa).

Belongs to the UPF0386 family.

The protein is UPF0386 protein Arad_1912 of Rhizobium rhizogenes (strain K84 / ATCC BAA-868) (Agrobacterium radiobacter).